Here is a 215-residue protein sequence, read N- to C-terminus: Intraflagellar transport protein 43 homolog B (215 aa).

Positions 1 to 107 (MDDHLKLGDS…SDGEGDIPVI (107 aa)) are disordered.

The protein belongs to the IFT43 family. As to quaternary structure, component of IFT complex A.

Component of IFT complex A (IFT-A) involved in retrograde ciliary transport along microtubules from the ciliary tip to the base. The chain is Intraflagellar transport protein 43 homolog B (ift43b) from Salmo salar (Atlantic salmon).